The following is a 322-amino-acid chain: tRNA U34 carboxymethyltransferase (322 aa).

Carboxy-S-adenosyl-L-methionine contacts are provided by residues K92, W106, K111, G131, 153–155, 181–182, M196, Y200, and R315; these read DPT and VE.

Belongs to the class I-like SAM-binding methyltransferase superfamily. CmoB family. As to quaternary structure, homotetramer.

The enzyme catalyses carboxy-S-adenosyl-L-methionine + 5-hydroxyuridine(34) in tRNA = 5-carboxymethoxyuridine(34) in tRNA + S-adenosyl-L-homocysteine + H(+). In terms of biological role, catalyzes carboxymethyl transfer from carboxy-S-adenosyl-L-methionine (Cx-SAM) to 5-hydroxyuridine (ho5U) to form 5-carboxymethoxyuridine (cmo5U) at position 34 in tRNAs. The chain is tRNA U34 carboxymethyltransferase from Colwellia psychrerythraea (strain 34H / ATCC BAA-681) (Vibrio psychroerythus).